The chain runs to 152 residues: Endoribonuclease YbeY (152 aa).

Residues H117, H121, and H127 each coordinate Zn(2+).

Belongs to the endoribonuclease YbeY family. Zn(2+) is required as a cofactor.

Its subcellular location is the cytoplasm. Its function is as follows. Single strand-specific metallo-endoribonuclease involved in late-stage 70S ribosome quality control and in maturation of the 3' terminus of the 16S rRNA. The protein is Endoribonuclease YbeY of Borreliella afzelii (strain PKo) (Borrelia afzelii).